Here is a 215-residue protein sequence, read N- to C-terminus: 2-phospho-L-lactate guanylyltransferase (215 aa).

Belongs to the CofC family. As to quaternary structure, homodimer.

The enzyme catalyses (2S)-2-phospholactate + GTP + H(+) = (2S)-lactyl-2-diphospho-5'-guanosine + diphosphate. The protein operates within cofactor biosynthesis; coenzyme F420 biosynthesis. Guanylyltransferase that catalyzes the activation of (2S)-2-phospholactate (2-PL) as (2S)-lactyl-2-diphospho-5'-guanosine, via the condensation of 2-PL with GTP. It is involved in the biosynthesis of coenzyme F420, a hydride carrier cofactor. The chain is 2-phospho-L-lactate guanylyltransferase from Methanococcoides burtonii (strain DSM 6242 / NBRC 107633 / OCM 468 / ACE-M).